Consider the following 321-residue polypeptide: Ubiquinone biosynthesis O-methyltransferase, mitochondrial (321 aa).

S-adenosyl-L-methionine contacts are provided by arginine 102, glycine 135, aspartate 157, and leucine 210. The Mg(2+) site is built by glutamate 211, glutamate 214, and histidine 215.

Belongs to the class I-like SAM-binding methyltransferase superfamily. UbiG/COQ3 family. In terms of assembly, component of a multi-subunit COQ enzyme complex. The cofactor is Mg(2+).

It is found in the mitochondrion inner membrane. It carries out the reaction a 3,4-dihydroxy-5-(all-trans-polyprenyl)benzoate + S-adenosyl-L-methionine = a 4-hydroxy-3-methoxy-5-(all-trans-polyprenyl)benzoate + S-adenosyl-L-homocysteine + H(+). It catalyses the reaction a 3-demethylubiquinone + S-adenosyl-L-methionine = a ubiquinone + S-adenosyl-L-homocysteine. The catalysed reaction is a 3-demethylubiquinol + S-adenosyl-L-methionine = a ubiquinol + S-adenosyl-L-homocysteine + H(+). It functions in the pathway cofactor biosynthesis; ubiquinone biosynthesis. Functionally, O-methyltransferase required for two non-consecutive steps during ubiquinone biosynthesis. Catalyzes the 2 O-methylation of 3,4-dihydroxy-5-(all-trans-polyprenyl)benzoic acid into 4-hydroxy-3-methoxy-5-(all-trans-polyprenyl)benzoic acid. Also catalyzes the last step of ubiquinone biosynthesis by mediating methylation of 3-demethylubiquinone into ubiquinone. Also able to mediate the methylation of 3-demethylubiquinol into ubiquinol. The sequence is that of Ubiquinone biosynthesis O-methyltransferase, mitochondrial from Dictyostelium discoideum (Social amoeba).